The chain runs to 208 residues: Large ribosomal subunit protein uL3 (208 aa).

The protein belongs to the universal ribosomal protein uL3 family. Part of the 50S ribosomal subunit. Forms a cluster with proteins L14 and L19.

Functionally, one of the primary rRNA binding proteins, it binds directly near the 3'-end of the 23S rRNA, where it nucleates assembly of the 50S subunit. The chain is Large ribosomal subunit protein uL3 from Desulfosudis oleivorans (strain DSM 6200 / JCM 39069 / Hxd3) (Desulfococcus oleovorans).